The primary structure comprises 896 residues: MKRHLNDVVLVFLVFIFGVKLGKGQNTTIQVINVGVVTDVGTTASNLSLLAINMSLSDFYSSRPESRTRLLLNFADSRDDVVGAAAAALDLIKNKEVKAILGPRTTMQASFVIEVGQKSQVPIISFSATSPFLDSGRSPYFFRSTYDDSSQVQAISEIIKVFGWREVVPVYENNAFGEGIMPGLTDALQAINIRIPYRTVISPNATDDEISVDLLKLMTKPTRVFVVHMNRFLASRVFSKARETGLMKQGYAWILTNGVIDHLVLMNGTDIEAMQGVIGIRTHFPISEELQTFRSRLAKAFPVSELNIYGLRAYDATTALAMAVEEAGTTNLTFSKMDGRNISDLEALSVSEYGPKLIRSLSQIQFKGLSGDYHFVDGQLHASVFEIVNVIDGGGILVGFWTQDKGLVKDLSPSSGTTRTFSSWKNHLNPILWPGITLTVPKGWEIPTNGKELQIGVPVGTFPQFVKVTTDPLTHETIVTGFCIDFFEAVIQAMPYDVSHRFIPFGDDDGKTNVFDAVVGDTTILANRSSYVDFTLPYTTSGVGMVVPLKDNVARSSLIFFKPLTPGLWGMTLGSFFVVGFVVWILEHRVNSEFTGPPQYQISTMFWFAFSIMVFAPRERVMSFTARVVVITWYFIVLVLTQSYTASLSSLLTTQQLNPTETSIKNVLAKGGPVAYQRDSFVLGKLRESGFPESRLVPFTSPEKCEELLNKGPSKGGVSAAFMEVPYVRVFLGQYCKKYKMVEVPFDVDGFGFVFPIGSPLVADVSRAILKVAESNKATQLETAWFKNIDKTCPDPMNNPDPNPTVSFRKLSLDSFLLLFVAAATVCTLALLKFVICFLIQNRIILNDEFYRGKRMKEMWLKFMESDGESYISRVRSTCPQVLIQPREEDIDPING.

Positions 1 to 24 (MKRHLNDVVLVFLVFIFGVKLGKG) are cleaved as a signal peptide. Residues 25–565 (QNTTIQVINV…SSLIFFKPLT (541 aa)) are Extracellular-facing. N-linked (GlcNAc...) asparagine glycosylation is found at N26, N46, N53, N204, N267, N331, N341, and N527. The chain crosses the membrane as a helical span at residues 566 to 586 (PGLWGMTLGSFFVVGFVVWIL). Residues 587–595 (EHRVNSEFT) lie on the Cytoplasmic side of the membrane. The helical transmembrane segment at 596–616 (GPPQYQISTMFWFAFSIMVFA) threads the bilayer. Residues 617–620 (PRER) are Cytoplasmic-facing. A helical transmembrane segment spans residues 621 to 641 (VMSFTARVVVITWYFIVLVLT). Over 642 to 815 (QSYTASLSSL…VSFRKLSLDS (174 aa)) the chain is Extracellular. Residues 816-836 (FLLLFVAAATVCTLALLKFVI) traverse the membrane as a helical segment. The Cytoplasmic segment spans residues 837–896 (CFLIQNRIILNDEFYRGKRMKEMWLKFMESDGESYISRVRSTCPQVLIQPREEDIDPING).

This sequence belongs to the glutamate-gated ion channel (TC 1.A.10.1) family. In terms of assembly, may form heteromers. Expressed predominantly in roots.

The protein resides in the membrane. Its function is as follows. Glutamate-gated receptor that probably acts as a non-selective cation channel. May be involved in light-signal transduction and calcium homeostasis via the regulation of calcium influx into cells. The protein is Glutamate receptor 2.4 (GLR2.4) of Arabidopsis thaliana (Mouse-ear cress).